We begin with the raw amino-acid sequence, 1006 residues long: Unconventional myosin-Id (1006 aa).

Position 2 is an N-acetylalanine (Ala2). The 687-residue stretch at 9–695 (FGKADFVLMD…TLFTLEELRA (687 aa)) folds into the Myosin motor domain. An ATP-binding site is contributed by 102–109 (GESGAGKT). Residue Ser200 is modified to Phosphoserine. Tyr536 carries the post-translational modification Phosphotyrosine. An actin-binding region spans residues 572 to 594 (MIALVDNLASKEPYYVRCIKPND). IQ domains follow at residues 699 to 719 (VRVVLFLQKVWRGTLARMRYK) and 721 to 741 (TKAALTIIRYYRRYKVKSYIH). The TH1 domain maps to 812–1005 (GQRADLGLQR…RSGFILSVPG (194 aa)).

This sequence belongs to the TRAFAC class myosin-kinesin ATPase superfamily. Myosin family. In terms of assembly, interacts (via the two IQ motifs) with calmodulin. Binds an additional calmodulin chain via a third, C-terminal region. Interacts with F-actin. As to expression, detected in enterocytes at the intestinal brush border membrane. Detected at the tip of intestinal microvilli (at protein level).

The protein resides in the cytoplasm. It is found in the perikaryon. The protein localises to the cell projection. Its subcellular location is the dendrite. It localises to the early endosome. The protein resides in the cell cortex. It is found in the basolateral cell membrane. Functionally, unconventional myosin that functions as actin-based motor protein with ATPase activity. Plays a role in endosomal protein trafficking, and especially in the transfer of cargo proteins from early to recycling endosomes. Required for normal planar cell polarity in ciliated tracheal cells, for normal rotational polarity of cilia, and for coordinated, unidirectional ciliary movement in the trachea. Required for normal, polarized cilia organization in brain ependymal epithelial cells. This is Unconventional myosin-Id from Mus musculus (Mouse).